Consider the following 1056-residue polypeptide: Isoleucine--tRNA ligase (1056 aa).

A 'HIGH' region motif is present at residues 56–66; the sequence is PFATGLPHYGH. The 'KMSKS' region motif lies at 603–607; it reads KMSKS. K606 provides a ligand contact to ATP.

Belongs to the class-I aminoacyl-tRNA synthetase family. IleS type 2 subfamily. As to quaternary structure, monomer. Zn(2+) serves as cofactor.

The protein resides in the cytoplasm. It carries out the reaction tRNA(Ile) + L-isoleucine + ATP = L-isoleucyl-tRNA(Ile) + AMP + diphosphate. In terms of biological role, catalyzes the attachment of isoleucine to tRNA(Ile). As IleRS can inadvertently accommodate and process structurally similar amino acids such as valine, to avoid such errors it has two additional distinct tRNA(Ile)-dependent editing activities. One activity is designated as 'pretransfer' editing and involves the hydrolysis of activated Val-AMP. The other activity is designated 'posttransfer' editing and involves deacylation of mischarged Val-tRNA(Ile). The polypeptide is Isoleucine--tRNA ligase (Bdellovibrio bacteriovorus (strain ATCC 15356 / DSM 50701 / NCIMB 9529 / HD100)).